The primary structure comprises 88 residues: Augerpeptide Hhe9a (88 aa).

Positions 1–21 (MMTKTGLVLLFAFLLVFPVSS) are cleaved as a signal peptide. The propeptide occupies 22 to 49 (LPMDAEAGHARLEMDKRDAGNEAWTRLL). Cystine bridges form between Cys-56/Cys-71, Cys-61/Cys-73, and Cys-67/Cys-86.

As to expression, expressed by the venom duct.

The protein localises to the secreted. In Hastula hectica (Sea snail), this protein is Augerpeptide Hhe9a.